We begin with the raw amino-acid sequence, 34 residues long: Photosystem II reaction center protein M (34 aa).

A helical transmembrane segment spans residues 7–27 (GFVASLMFILVPAIFLIVLYI).

This sequence belongs to the PsbM family. As to quaternary structure, PSII is composed of 1 copy each of membrane proteins PsbA, PsbB, PsbC, PsbD, PsbE, PsbF, PsbH, PsbI, PsbJ, PsbK, PsbL, PsbM, PsbT, PsbX, PsbY, PsbZ, Psb30/Ycf12, peripheral proteins PsbO, CyanoQ (PsbQ), PsbU, PsbV and a large number of cofactors. It forms dimeric complexes.

Its subcellular location is the cellular thylakoid membrane. Functionally, one of the components of the core complex of photosystem II (PSII). PSII is a light-driven water:plastoquinone oxidoreductase that uses light energy to abstract electrons from H(2)O, generating O(2) and a proton gradient subsequently used for ATP formation. It consists of a core antenna complex that captures photons, and an electron transfer chain that converts photonic excitation into a charge separation. This subunit is found at the monomer-monomer interface. This is Photosystem II reaction center protein M from Synechococcus sp. (strain CC9605).